Here is a 123-residue protein sequence, read N- to C-terminus: Small ribosomal subunit protein uS12cz/uS12cy (123 aa).

Belongs to the universal ribosomal protein uS12 family. Part of the 30S ribosomal subunit.

It is found in the plastid. The protein localises to the chloroplast. Functionally, with S4 and S5 plays an important role in translational accuracy. Located at the interface of the 30S and 50S subunits. The chain is Small ribosomal subunit protein uS12cz/uS12cy (rps12-A) from Gossypium barbadense (Sea Island cotton).